Here is a 375-residue protein sequence, read N- to C-terminus: Chaperone protein DnaJ (375 aa).

The J domain occupies 5–70 (DYYELLGISR…EKRAAYDQYG (66 aa)). The CR-type zinc-finger motif lies at 132–210 (GTTKDIKIHT…CHGDGRVNKA (79 aa)). 8 residues coordinate Zn(2+): cysteine 145, cysteine 148, cysteine 162, cysteine 165, cysteine 184, cysteine 187, cysteine 198, and cysteine 201. CXXCXGXG motif repeat units lie at residues 145 to 152 (CDTCHGTG), 162 to 169 (CPHCHGAG), 184 to 191 (CHFCHGTG), and 198 to 205 (CKTCHGDG).

The protein belongs to the DnaJ family. As to quaternary structure, homodimer. Requires Zn(2+) as cofactor.

It is found in the cytoplasm. Participates actively in the response to hyperosmotic and heat shock by preventing the aggregation of stress-denatured proteins and by disaggregating proteins, also in an autonomous, DnaK-independent fashion. Unfolded proteins bind initially to DnaJ; upon interaction with the DnaJ-bound protein, DnaK hydrolyzes its bound ATP, resulting in the formation of a stable complex. GrpE releases ADP from DnaK; ATP binding to DnaK triggers the release of the substrate protein, thus completing the reaction cycle. Several rounds of ATP-dependent interactions between DnaJ, DnaK and GrpE are required for fully efficient folding. Also involved, together with DnaK and GrpE, in the DNA replication of plasmids through activation of initiation proteins. This Aggregatibacter actinomycetemcomitans (Actinobacillus actinomycetemcomitans) protein is Chaperone protein DnaJ.